A 187-amino-acid chain; its full sequence is Orotate phosphoribosyltransferase (187 aa).

5-phospho-alpha-D-ribose 1-diphosphate-binding positions include Arg98, Lys99, Lys102, His104, and Glu128–Ser136. Orotate contacts are provided by Thr132 and Arg160.

It belongs to the purine/pyrimidine phosphoribosyltransferase family. PyrE subfamily. As to quaternary structure, homodimer. Mg(2+) is required as a cofactor.

It catalyses the reaction orotidine 5'-phosphate + diphosphate = orotate + 5-phospho-alpha-D-ribose 1-diphosphate. The protein operates within pyrimidine metabolism; UMP biosynthesis via de novo pathway; UMP from orotate: step 1/2. In terms of biological role, catalyzes the transfer of a ribosyl phosphate group from 5-phosphoribose 1-diphosphate to orotate, leading to the formation of orotidine monophosphate (OMP). The chain is Orotate phosphoribosyltransferase from Rhodopseudomonas palustris (strain BisB18).